We begin with the raw amino-acid sequence, 115 residues long: Putative membrane protein insertion efficiency factor (115 aa).

Residues 81–115 (DPRPGRCGCKDAGPAVSAGSTEGNPGRRTDGTDPD) are disordered. Residues 105–115 (PGRRTDGTDPD) show a composition bias toward basic and acidic residues.

The protein belongs to the UPF0161 family.

The protein localises to the cell inner membrane. In terms of biological role, could be involved in insertion of integral membrane proteins into the membrane. The protein is Putative membrane protein insertion efficiency factor of Rhodospirillum rubrum (strain ATCC 11170 / ATH 1.1.1 / DSM 467 / LMG 4362 / NCIMB 8255 / S1).